The chain runs to 488 residues: MTNKNETGWNLESSYTVLPKSFFTEIPPTPVHSPELIKLNNSLAISLGFNPEELKKDAEIAILAGNTIPEGAHPLAQAYAGHQFGHFNVLGDGRALLIGEQITPSGERFDIQLKGSGPTPYSRRGDGRAALGPMLREYIISEAMYALDIPTTRSLAVVSTGEPIYRETKLPGAILTRVASSHIRVGTFQYAAARGSIEDLKALADYTIKRHYPEVESTENPYVALLQEVIKRQASLIAKWQLVGFIHGVMNTDNITISGETIDYGPCAFMDSYNQGTVFSSIDTQGRYAYGNQPYMAAWDLARLAESLIPILHEDEEEALKIAQDEISKFSVQYENNWFLGIKKKLGLFSNEEHDQSLIEKLLKAMEKYKADYTNTFRALTDNILENAPLFKSPEFKEWYELWQSRLERQKESKDDAYKLMKNNNPVIIPRNHRVEEALEAAVKDGDYSVMEKLLQALANPYEYSQEQADYCTPPVPSNRPYRTFCGT.

Gly91, Gly93, Arg94, Lys114, Asp126, Gly127, Arg177, and Arg184 together coordinate ATP. Asp253 serves as the catalytic Proton acceptor. Asn254 and Asp263 together coordinate Mg(2+). Asp263 lines the ATP pocket.

Belongs to the SELO family. Mg(2+) is required as a cofactor. Requires Mn(2+) as cofactor.

The enzyme catalyses L-seryl-[protein] + ATP = 3-O-(5'-adenylyl)-L-seryl-[protein] + diphosphate. It catalyses the reaction L-threonyl-[protein] + ATP = 3-O-(5'-adenylyl)-L-threonyl-[protein] + diphosphate. The catalysed reaction is L-tyrosyl-[protein] + ATP = O-(5'-adenylyl)-L-tyrosyl-[protein] + diphosphate. It carries out the reaction L-histidyl-[protein] + UTP = N(tele)-(5'-uridylyl)-L-histidyl-[protein] + diphosphate. The enzyme catalyses L-seryl-[protein] + UTP = O-(5'-uridylyl)-L-seryl-[protein] + diphosphate. It catalyses the reaction L-tyrosyl-[protein] + UTP = O-(5'-uridylyl)-L-tyrosyl-[protein] + diphosphate. In terms of biological role, nucleotidyltransferase involved in the post-translational modification of proteins. It can catalyze the addition of adenosine monophosphate (AMP) or uridine monophosphate (UMP) to a protein, resulting in modifications known as AMPylation and UMPylation. This is Protein nucleotidyltransferase YdiU from Bacillus mycoides (strain KBAB4) (Bacillus weihenstephanensis).